Here is a 215-residue protein sequence, read N- to C-terminus: Small ribosomal subunit protein uS7 (215 aa).

This sequence belongs to the universal ribosomal protein uS7 family. As to quaternary structure, part of the 30S ribosomal subunit.

In terms of biological role, one of the primary rRNA binding proteins, it binds directly to 16S rRNA where it nucleates assembly of the head domain of the 30S subunit. Is located at the subunit interface close to the decoding center. The polypeptide is Small ribosomal subunit protein uS7 (Thermococcus kodakarensis (strain ATCC BAA-918 / JCM 12380 / KOD1) (Pyrococcus kodakaraensis (strain KOD1))).